The sequence spans 156 residues: Extracellular giant hemoglobin major globin subunit A1 (156 aa).

Positions 1–16 (MKVLIIFACLVVMASA) are cleaved as a signal peptide. In terms of domain architecture, Globin spans 17 to 156 (VCNRLEQILV…YERIASGISG (140 aa)). Cysteines 18 and 146 form a disulfide. Hydrogen sulfide is bound at residue cysteine 79. Histidine 110 contacts heme b.

The protein belongs to the globin family. In terms of assembly, the 400 kDa hemoglobin consists of a spherical 24-mer arranged as a double layer of dome-shaped dodecamers. Each dodecamer is composed of the 3-fold trimer of the tetramer A1-A2-B1-B2 having one intra-tetramer (A1-B2) disulfide bond and one inter-tetramer (B1-B2) disulfide bond per tetramer.

The protein resides in the secreted. In terms of biological role, the extracellular giant hemoglobin is able to bind and transport oxygen and hydrosulfide simultaneously and reversibly at two different sites. This is Extracellular giant hemoglobin major globin subunit A1 (ghbA1) from Oligobrachia mashikoi (Beard worm).